We begin with the raw amino-acid sequence, 472 residues long: Cysteine--tRNA ligase (472 aa).

Residue Cys29 coordinates Zn(2+). The 'HIGH' region signature appears at 31 to 41 (ITVYDYCHLGH). Residues Cys214, His239, and Glu243 each coordinate Zn(2+). The short motif at 271 to 275 (KMSKS) is the 'KMSKS' region element. Lys274 is an ATP binding site.

Belongs to the class-I aminoacyl-tRNA synthetase family. In terms of assembly, monomer. It depends on Zn(2+) as a cofactor.

Its subcellular location is the cytoplasm. It catalyses the reaction tRNA(Cys) + L-cysteine + ATP = L-cysteinyl-tRNA(Cys) + AMP + diphosphate. The protein is Cysteine--tRNA ligase of Picosynechococcus sp. (strain ATCC 27264 / PCC 7002 / PR-6) (Agmenellum quadruplicatum).